The chain runs to 480 residues: Phenolic acid decarboxylase (480 aa).

3 residues coordinate Mn(2+): asparagine 163, histidine 185, and glutamate 227. Prenylated FMN is bound by residues asparagine 163–arginine 168 and methionine 184–histidine 185. The active-site Proton donor is glutamate 278. Positions threonine 443–glutamate 466 are disordered.

Belongs to the UbiD family. YclC subfamily. As to quaternary structure, homohexamer. Prenylated FMN serves as cofactor. Mn(2+) is required as a cofactor.

It catalyses the reaction 4-hydroxybenzoate + H(+) = phenol + CO2. It carries out the reaction 3,4-dihydroxybenzoate + H(+) = catechol + CO2. Its activity is regulated as follows. Inhibited by Zn(2+), (2,3,4)-trihydroxybenzoate and (3,4,5)-trihydroxybenzoate. Ammonium and rubidium ions decrease the activity of the carboxylation of 3,4-dihydroxybenzoate by about 20%. In terms of biological role, involved in the non-oxidative decarboxylation and detoxification of phenolic derivatives under anaerobic conditions. Oxygen-sensitive phenolic acid decarboxylase that catalyzes the reversible decarboxylation of 4-hydroxybenzoate and 3,4-dihydroxybenzoate. This chain is Phenolic acid decarboxylase, found in Sedimentibacter hydroxybenzoicus (Clostridium hydroxybenzoicum).